Consider the following 203-residue polypeptide: Thymidylate kinase (203 aa).

Residue 7-14 (GGEGAGKT) participates in ATP binding.

Belongs to the thymidylate kinase family.

It carries out the reaction dTMP + ATP = dTDP + ADP. In terms of biological role, phosphorylation of dTMP to form dTDP in both de novo and salvage pathways of dTTP synthesis. In Chlamydia trachomatis serovar D (strain ATCC VR-885 / DSM 19411 / UW-3/Cx), this protein is Thymidylate kinase (tmk).